We begin with the raw amino-acid sequence, 576 residues long: Sulfite reductase [NADPH] hemoprotein beta-component (576 aa).

Residues Cys435, Cys441, Cys480, and Cys484 each coordinate [4Fe-4S] cluster. Siroheme is bound at residue Cys484.

This sequence belongs to the nitrite and sulfite reductase 4Fe-4S domain family. Alpha(8)-beta(8). The alpha component is a flavoprotein, the beta component is a hemoprotein. The cofactor is siroheme. It depends on [4Fe-4S] cluster as a cofactor.

It carries out the reaction hydrogen sulfide + 3 NADP(+) + 3 H2O = sulfite + 3 NADPH + 4 H(+). It participates in sulfur metabolism; hydrogen sulfide biosynthesis; hydrogen sulfide from sulfite (NADPH route): step 1/1. Component of the sulfite reductase complex that catalyzes the 6-electron reduction of sulfite to sulfide. This is one of several activities required for the biosynthesis of L-cysteine from sulfate. The chain is Sulfite reductase [NADPH] hemoprotein beta-component from Yersinia pseudotuberculosis serotype O:1b (strain IP 31758).